Reading from the N-terminus, the 149-residue chain is Calmodulin (149 aa).

At Ala2 the chain carries N-acetylalanine. EF-hand domains lie at 8 to 43 (EQIA…LGQN), 44 to 79 (PTEA…KMKD), 81 to 116 (DSEE…LGEK), and 117 to 149 (LTDE…MMSK). The Ca(2+) site is built by Asp21, Asp23, Asp25, Thr27, Glu32, Asp57, Asp59, Asn61, Thr63, Glu68, Asp94, Asp96, Asn98, and Glu105. Residue Lys116 is modified to N6,N6,N6-trimethyllysine. Residues Asp130, Asp132, Asp134, Gln136, and Glu141 each contribute to the Ca(2+) site.

Belongs to the calmodulin family.

In terms of biological role, calmodulin mediates the control of a large number of enzymes, ion channels and other proteins by Ca(2+). Among the enzymes to be stimulated by the calmodulin-Ca(2+) complex are a number of protein kinases and phosphatases. The protein is Calmodulin of Lumbricus rubellus (Humus earthworm).